Here is a 346-residue protein sequence, read N- to C-terminus: Isopentenyl-diphosphate delta-isomerase (346 aa).

A substrate-binding site is contributed by 12 to 13 (RK). Residues 67 to 69 (ALT), Ser-97, and Asn-126 each bind FMN. 97–99 (SQR) is a substrate binding site. Position 156 (Gln-156) interacts with substrate. Glu-157 contributes to the Mg(2+) binding site. FMN is bound by residues Lys-188, Thr-218, 263 to 265 (GIR), and 284 to 285 (AG).

This sequence belongs to the IPP isomerase type 2 family. Homooctamer. Dimer of tetramers. Requires FMN as cofactor. NADPH serves as cofactor. Mg(2+) is required as a cofactor.

It localises to the cytoplasm. The enzyme catalyses isopentenyl diphosphate = dimethylallyl diphosphate. In terms of biological role, involved in the biosynthesis of isoprenoids. Catalyzes the 1,3-allylic rearrangement of the homoallylic substrate isopentenyl (IPP) to its allylic isomer, dimethylallyl diphosphate (DMAPP). The polypeptide is Isopentenyl-diphosphate delta-isomerase (Moorella thermoacetica (strain ATCC 39073 / JCM 9320)).